A 195-amino-acid chain; its full sequence is MRLLLLLLVAASAMVRSEASANLGGVPSKRLKMQYATGPLLKFQICVSUGYRRVFEEYMRVISQRYPDIRIEGENYLPQPIYRHIASFLSVFKLVLIGLIIVGKDPFAFFGMQAPSIWQWGQENKVYACMMVFFLSNMIENQCMSTGAFEITLNDVPVWSKLESGHLPSMQQLVQILDNEMKLNVHMDSIPHHRS.

Residues 1 to 19 (MRLLLLLLVAASAMVRSEA) form the signal peptide. Residues 46–49 (CVSU) constitute a cross-link (cysteinyl-selenocysteine (Cys-Sec)). Sec-49 is a non-standard amino acid (selenocysteine). Residues 85-103 (IASFLSVFKLVLIGLIIVG) form a helical membrane-spanning segment.

The protein belongs to the SelWTH family. Selenoprotein T subfamily. In terms of processing, may contain a selenide-sulfide bond between Cys-46 and Sec-49. This bond is speculated to serve as redox-active pair. As to expression, ubiquitous. Highly expressed in the endocrine pancreas.

It localises to the endoplasmic reticulum membrane. The enzyme catalyses [thioredoxin]-dithiol + NADP(+) = [thioredoxin]-disulfide + NADPH + H(+). Its function is as follows. Selenoprotein with thioredoxin reductase-like oxidoreductase activity. Protects dopaminergic neurons against oxidative stress and cell death. Involved in ADCYAP1/PACAP-induced calcium mobilization and neuroendocrine secretion. Plays a role in fibroblast anchorage and redox regulation. In gastric smooth muscle, modulates the contraction processes through the regulation of calcium release and MYLK activation. In pancreatic islets, involved in the control of glucose homeostasis, contributes to prolonged ADCYAP1/PACAP-induced insulin secretion. The sequence is that of Thioredoxin reductase-like selenoprotein T from Homo sapiens (Human).